The sequence spans 90 residues: Acylphosphatase (90 aa).

The region spanning 3-90 is the Acylphosphatase-like domain; the sequence is QRQFTVYGCV…RVFSDFTIER (88 aa). Catalysis depends on residues arginine 18 and asparagine 36.

This sequence belongs to the acylphosphatase family.

The enzyme catalyses an acyl phosphate + H2O = a carboxylate + phosphate + H(+). The sequence is that of Acylphosphatase (acyP) from Actinobacillus succinogenes (strain ATCC 55618 / DSM 22257 / CCUG 43843 / 130Z).